A 147-amino-acid chain; its full sequence is Protein SprT-like (147 aa).

The region spanning 5–142 is the SprT-like domain; that stretch reads DYVNEVSLED…SFCRGHLKEI (138 aa). His-64 is a binding site for Zn(2+). Glu-65 is an active-site residue. His-68 contacts Zn(2+).

Belongs to the SprT family. Zn(2+) is required as a cofactor.

It is found in the cytoplasm. The polypeptide is Protein SprT-like (Streptococcus uberis (strain ATCC BAA-854 / 0140J)).